We begin with the raw amino-acid sequence, 434 residues long: Glutamate-1-semialdehyde 2,1-aminomutase (434 aa).

Lys271 carries the post-translational modification N6-(pyridoxal phosphate)lysine.

It belongs to the class-III pyridoxal-phosphate-dependent aminotransferase family. HemL subfamily. In terms of assembly, homodimer. Pyridoxal 5'-phosphate serves as cofactor.

The protein localises to the cytoplasm. It catalyses the reaction (S)-4-amino-5-oxopentanoate = 5-aminolevulinate. Its pathway is porphyrin-containing compound metabolism; protoporphyrin-IX biosynthesis; 5-aminolevulinate from L-glutamyl-tRNA(Glu): step 2/2. It participates in porphyrin-containing compound metabolism; chlorophyll biosynthesis. This is Glutamate-1-semialdehyde 2,1-aminomutase from Prochlorococcus marinus (strain MIT 9312).